A 360-amino-acid polypeptide reads, in one-letter code: A-type ATP synthase subunit C (360 aa).

The protein belongs to the V-ATPase V0D/AC39 subunit family. As to quaternary structure, has multiple subunits, A(3), B(3), C, D, E, F, G, I and K(x); there may be a few other subunits as well.

The protein resides in the cell membrane. Component of the A-type ATP synthase that produces ATP from ADP in the presence of a proton gradient across the membrane. This chain is A-type ATP synthase subunit C, found in Methanosarcina mazei (strain ATCC BAA-159 / DSM 3647 / Goe1 / Go1 / JCM 11833 / OCM 88) (Methanosarcina frisia).